Here is a 100-residue protein sequence, read N- to C-terminus: Large ribosomal subunit protein bL28 (100 aa).

It belongs to the bacterial ribosomal protein bL28 family.

This chain is Large ribosomal subunit protein bL28, found in Methylobacterium radiotolerans (strain ATCC 27329 / DSM 1819 / JCM 2831 / NBRC 15690 / NCIMB 10815 / 0-1).